An 837-amino-acid chain; its full sequence is MNHLEGSAEVEVTDEAAGGEVNESVEADLEHPEVEEEQQQPPQQQHYVGRHQRGRALEDLRAQLGQEEEERGECLARSASTESGFHNHTDTAEGDVIAAARDGYDAERAQDPEDESAYAVQYRPEAEEYTEQAEAEHAEATHRRALPNHLHFHSLEHEEAMNAAYSGYVYTHRLFHRGEDEPYSEPYADYGGLQEHVYEEIGDAPELDARDGLRLYEQERDEAAAYRQEALGARLHHYDERSDGESDSPEKEAEFAPYPRMDSYEQEEDIDQIVAEVKQSMSSQSLDKAAEDMPEAEQDLERPPTPAGGRPDSPGLQAPAGQQRAVGPAGGGEAGQRYSKEKRDAISLAIKDIKEAIEEVKTRTIRSPYTPDEPKEPIWVMRQDISPTRDCDDQRPMDGDSPSPGSSSPLGAESSSTSLHPSDPVEASTNKESRKSLASFPTYVEVPGPCDPEDLIDGIIFAANYLGSTQLLSDKTPSKNVRMMQAQEAVSRIKMAQKLAKSRKKAPEGESQPMTEVDLFISTQRIKVLNADTQETMMDHPLRTISYIADIGNIVVLMARRRMPRSNSQENVEASHPSQDGKRQYKMICHVFESEDAQLIAQSIGQAFSVAYQEFLRANGINPEDLSQKEYSDLLNTQDMYNDDLIHFSKSENCKDVFIEKQKGEILGVVIVESGWGSILPTVIIANMMHGGPAEKSGKLNIGDQIMSINGTSLVGLPLSTCQSIIKGLKNQSRVKLNIVRCPPVTTVLIRRPDLRYQLGFSVQNGIICSLMRGGIAERGGVRVGHRIIEINGQSVVATPHEKIVHILSNAVGEIHMKTMPAAMYRLLTAQEQPVYI.

3 disordered regions span residues 1–93 (MNHL…DTAE), 238–342 (YDER…SKEK), and 358–435 (EEVK…ESRK). Positions 23 to 38 (ESVEADLEHPEVEEEQ) are enriched in acidic residues. Serine 78, serine 242, serine 246, serine 248, serine 263, serine 280, and serine 285 each carry phosphoserine. The tract at residues 226–314 (YRQEALGARL…TPAGGRPDSP (89 aa)) is munc-18-1 binding. Residues 238–254 (YDERSDGESDSPEKEAE) show a composition bias toward basic and acidic residues. Threonine 305 bears the Phosphothreonine mark. 2 positions are modified to phosphoserine: serine 313 and serine 367. Phosphothreonine is present on threonine 370. The interval 373–436 (EPKEPIWVMR…ASTNKESRKS (64 aa)) is LIN-2/CASK binding. Residues 387 to 398 (PTRDCDDQRPMD) are compositionally biased toward basic and acidic residues. Low complexity predominate over residues 399–418 (GDSPSPGSSSPLGAESSSTS). Phosphoserine is present on residues serine 401, serine 403, serine 408, and serine 568. Positions 457 to 643 (DGIIFAANYL…LLNTQDMYND (187 aa)) constitute a PID domain. Positions 626-641 (LSQKEYSDLLNTQDMY) are autoinhibitory helix linker. PDZ domains lie at 656–742 (DVFI…IVRC) and 747–822 (TVLI…TMPA).

Part of a multimeric complex containing STXBP1 and STX1A. Interacts with STXBP1. Also part of the brain-specific heterotrimeric complex LIN-10/X11-alpha, LIN-2/CASK, and LIN7. Component of the brain-specific heterotrimeric complex (LIN-10-LIN-2-LIN-7 complex) composed of at least APBA1, CASK, and LIN7, which associates with the motor protein KIF17 to transport vesicles along microtubules. Within the complex, interacts (via PDZ domain) with the motor protein KIF17; the interaction is direct and is required for association of KIF17 with the cargo that is to be transported. Both isoform 1 and isoform 2 bind to the cytoplasmic domain of amyloid protein (APP). Interacts (via PDZ 1 and 2 domains) with FSPB. Isoform 2, but not isoform 1, interacts (via its truncated PID domain) with active, GTP-bound RAB6A and RAB6B. Brain and spinal cord. Isoform 2 is expressed in testis and brain, but not detected in lung, liver or spleen.

It is found in the cytoplasm. The protein localises to the perinuclear region. Its subcellular location is the nucleus. The protein resides in the golgi apparatus. Putative function in synaptic vesicle exocytosis by binding to Munc18-1, an essential component of the synaptic vesicle exocytotic machinery. May modulate processing of the amyloid-beta precursor protein (APP) and hence formation of APP-beta. Component of the LIN-10-LIN-2-LIN-7 complex, which associates with the motor protein KIF17 to transport vesicles containing N-methyl-D-aspartate (NMDA) receptor subunit NR2B along microtubules. The chain is Amyloid-beta A4 precursor protein-binding family A member 1 (APBA1) from Homo sapiens (Human).